A 382-amino-acid chain; its full sequence is B3 domain-containing protein Os03g0622100 (382 aa).

A DNA-binding region (TF-B3 1) is located at residues 29–123; the sequence is CKHFLTYMVG…SFDVLIFDPS (95 aa). Composition is skewed to basic and acidic residues over residues 136–158 and 193–202; these read RGFG…DKNG and QDHREEKKEG. A disordered region spans residues 136–222; the sequence is RGFGREEKSA…EDVDKDGEDR (87 aa). Acidic residues predominate over residues 203-218; it reads DDEDEDEDEDEDVDKD. The TF-B3 2 DNA-binding region spans 261-363; sequence KVIHASHLLS…AGDRLRRRPR (103 aa).

It is found in the nucleus. The sequence is that of B3 domain-containing protein Os03g0622100 from Oryza sativa subsp. japonica (Rice).